The sequence spans 60 residues: Probable tautomerase SP_1017 (60 aa).

The Proton acceptor; via imino nitrogen role is filled by proline 2.

This sequence belongs to the 4-oxalocrotonate tautomerase family.

The sequence is that of Probable tautomerase SP_1017 from Streptococcus pneumoniae serotype 4 (strain ATCC BAA-334 / TIGR4).